Consider the following 559-residue polypeptide: Formate--tetrahydrofolate ligase (559 aa).

Position 68-75 (Thr68–Thr75) interacts with ATP.

Belongs to the formate--tetrahydrofolate ligase family.

It carries out the reaction (6S)-5,6,7,8-tetrahydrofolate + formate + ATP = (6R)-10-formyltetrahydrofolate + ADP + phosphate. It participates in one-carbon metabolism; tetrahydrofolate interconversion. The polypeptide is Formate--tetrahydrofolate ligase (Mesorhizobium japonicum (strain LMG 29417 / CECT 9101 / MAFF 303099) (Mesorhizobium loti (strain MAFF 303099))).